The following is a 117-amino-acid chain: MRTLLIRYILWRNDGDPSYYNDDFEKLMLLDELVDDSDVCTLIKNMRMTLSDGPLLDRLNQPVNNVEDVKRMIAISAKVARDIGERPEIRWEESFTILFRMIETYFDDLMIDLYGEK.

This sequence belongs to the poxviridae OPG035 family.

In terms of biological role, bcl-2-like protein which contributes to virulence by preventing host NF-kappa-B activation in response to pro-inflammatory stimuli such as TNF-alpha or IL1B. The protein is Protein OPG035 (OPG035) of Homo sapiens (Human).